Here is a 186-residue protein sequence, read N- to C-terminus: Large ribosomal subunit protein eL18B (186 aa).

Lys50 carries the N6,N6,N6-trimethyllysine modification. Lys116 participates in a covalent cross-link: Glycyl lysine isopeptide (Lys-Gly) (interchain with G-Cter in ubiquitin).

The protein belongs to the eukaryotic ribosomal protein eL18 family. In terms of assembly, component of the large ribosomal subunit (LSU). Mature yeast ribosomes consist of a small (40S) and a large (60S) subunit. The 40S small subunit contains 1 molecule of ribosomal RNA (18S rRNA) and 33 different proteins (encoded by 57 genes). The large 60S subunit contains 3 rRNA molecules (25S, 5.8S and 5S rRNA) and 46 different proteins (encoded by 81 genes). eL18 interacts with NAP1.

It is found in the cytoplasm. Functionally, component of the ribosome, a large ribonucleoprotein complex responsible for the synthesis of proteins in the cell. The small ribosomal subunit (SSU) binds messenger RNAs (mRNAs) and translates the encoded message by selecting cognate aminoacyl-transfer RNA (tRNA) molecules. The large subunit (LSU) contains the ribosomal catalytic site termed the peptidyl transferase center (PTC), which catalyzes the formation of peptide bonds, thereby polymerizing the amino acids delivered by tRNAs into a polypeptide chain. The nascent polypeptides leave the ribosome through a tunnel in the LSU and interact with protein factors that function in enzymatic processing, targeting, and the membrane insertion of nascent chains at the exit of the ribosomal tunnel. This is Large ribosomal subunit protein eL18B from Saccharomyces cerevisiae (strain ATCC 204508 / S288c) (Baker's yeast).